A 299-amino-acid chain; its full sequence is Protease HtpX homolog (299 aa).

Helical transmembrane passes span 14-34 and 39-59; these read ILVM…VGYL and ATGG…IMVG. His-144 serves as a coordination point for Zn(2+). Glu-145 is a catalytic residue. Position 148 (His-148) interacts with Zn(2+). Transmembrane regions (helical) follow at residues 159–179 and 196–216; these read IALA…NFMW and VFAI…ATMV. Zn(2+) is bound at residue Glu-225.

Belongs to the peptidase M48B family. Requires Zn(2+) as cofactor.

It localises to the cell membrane. This Limosilactobacillus fermentum (strain NBRC 3956 / LMG 18251) (Lactobacillus fermentum) protein is Protease HtpX homolog.